Consider the following 125-residue polypeptide: Phosphoribosyl-AMP cyclohydrolase (125 aa).

Mg(2+) is bound at residue Asp-86. Cys-87 provides a ligand contact to Zn(2+). The Mg(2+) site is built by Asp-88 and Asp-90. Zn(2+)-binding residues include Cys-103 and Cys-110.

The protein belongs to the PRA-CH family. Homodimer. Requires Mg(2+) as cofactor. It depends on Zn(2+) as a cofactor.

The protein resides in the cytoplasm. It catalyses the reaction 1-(5-phospho-beta-D-ribosyl)-5'-AMP + H2O = 1-(5-phospho-beta-D-ribosyl)-5-[(5-phospho-beta-D-ribosylamino)methylideneamino]imidazole-4-carboxamide. The protein operates within amino-acid biosynthesis; L-histidine biosynthesis; L-histidine from 5-phospho-alpha-D-ribose 1-diphosphate: step 3/9. Functionally, catalyzes the hydrolysis of the adenine ring of phosphoribosyl-AMP. The chain is Phosphoribosyl-AMP cyclohydrolase from Erythrobacter litoralis (strain HTCC2594).